Consider the following 608-residue polypeptide: MKWVTFLLLLFVSGSAFSRGVFRREAHKSEIAHRYNDLGEQHFKGLVLIAFSQYLQKCSYDEHAKLVQEVTDFAKTCVADESAANCDKSLHTLFGDKLCAIPNLRENYGELADCCTKQEPERNECFLQHKDDNPSLPPFERPEAEAMCTSFKENPTTFMGHYLHEVARRHPYFYAPELLYYAEQYNEILTQCCAEADKESCLTPKLDGVKEKALVSSVRQRMKCSSMQKFGERAFKAWAVARLSQTFPNADFAEITKLATDLTKVNKECCHGDLLECADDRAELAKYMCENQATISSKLQTCCDKPLLKKAHCLSEVEHDTMPADLPAIAADFVEDQEVCKNYAEAKDVFLGTFLYEYSRRHPDYSVSLLLRLAKKYEATLEKCCAEANPPACYGTVLAEFQPLVEEPKNLVKTNCDLYEKLGEYGFQNAILVRYTQKAPQVSTPTLVEAARNLGRVGTKCCTLPEDQRLPCVEDYLSAILNRVCLLHEKTPVSEHVTKCCSGSLVERRPCFSALTVDETYVPKEFKAETFTFHSDICTLPEKEKQIKKQTALAELVKHKPKATAEQLKTVMDDFAQFLDTCCKAADKDTCFSTEGPNLVTRCKDALA.

Residues 1–18 (MKWVTFLLLLFVSGSAFS) form the signal peptide. A propeptide spanning residues 19-24 (RGVFRR) is cleaved from the precursor. 3 Albumin domains span residues 19-211 (RGVF…GVKE), 212-403 (KALV…EFQP), and 404-601 (LVEE…NLVT). His-27 is a Cu cation binding site. Ser-29 is modified (phosphoserine). Ca(2+) contacts are provided by Glu-30 and Asp-37. The cysteines at positions 77 and 86 are disulfide-linked. 2 positions are modified to phosphoserine: Ser-82 and Ser-89. Zn(2+) is bound at residue His-91. Cystine bridges form between Cys-99-Cys-115, Cys-114-Cys-125, Cys-148-Cys-193, Cys-192-Cys-201, Cys-224-Cys-270, and Cys-269-Cys-277. Residue Lys-229 is modified to N6-succinyllysine. Glu-268 lines the Ca(2+) pocket. Residues His-271 and Asp-273 each coordinate Zn(2+). Ca(2+) contacts are provided by Asp-273, Glu-276, and Asp-279. 8 disulfides stabilise this stretch: Cys-289–Cys-303, Cys-302–Cys-313, Cys-340–Cys-385, Cys-384–Cys-393, Cys-416–Cys-462, Cys-461–Cys-472, Cys-485–Cys-501, and Cys-500–Cys-511. Ser-297 is subject to Phosphoserine. Ser-443 carries the post-translational modification Phosphoserine. Phosphothreonine is present on residues Thr-444 and Thr-446. Residue Lys-460 is modified to N6-succinyllysine. Ser-513 bears the Phosphoserine mark. Intrachain disulfides connect Cys-538/Cys-583 and Cys-582/Cys-591. An N6-succinyllysine modification is found at Lys-543. Position 558 is an N6-methyllysine (Lys-558). Position 570 is a phosphothreonine (Thr-570). At Lys-588 the chain carries N6-succinyllysine.

The protein belongs to the ALB/AFP/VDB family. In terms of assembly, part of a complex composed of complement component C3, CLCA1/CLCA3, A2ML1/OH and ALB/serum albumin. Interacts with FCGRT; this interaction regulates ALB homeostasis. Interacts with TASOR. In plasma, occurs in a covalently-linked complex with chromophore-bound alpha-1-microglobulin; this interaction does not prevent fatty acid binding to ALB. In terms of processing, phosphorylated by FAM20C in the extracellular medium. Plasma. Expressed in the granular cells within the cerebellum.

Its subcellular location is the secreted. In terms of biological role, binds water, Ca(2+), Na(+), K(+), fatty acids, hormones, bilirubin and drugs. Its main function is the regulation of the colloidal osmotic pressure of blood. Major zinc transporter in plasma, typically binds about 80% of all plasma zinc. Major calcium and magnesium transporter in plasma, binds approximately 45% of circulating calcium and magnesium in plasma. Potentially has more than two calcium-binding sites and might additionally bind calcium in a non-specific manner. The shared binding site between zinc and calcium at residue Asp-273 suggests a crosstalk between zinc and calcium transport in the blood. The rank order of affinity is zinc &gt; calcium &gt; magnesium. Binds to the bacterial siderophore enterobactin and inhibits enterobactin-mediated iron uptake of E.coli from ferric transferrin, and may thereby limit the utilization of iron and growth of enteric bacteria such as E.coli. Does not prevent iron uptake by the bacterial siderophore aerobactin. The polypeptide is Albumin (Alb) (Mus musculus (Mouse)).